Reading from the N-terminus, the 236-residue chain is tRNA (guanine-N(1)-)-methyltransferase (236 aa).

S-adenosyl-L-methionine contacts are provided by residues glycine 114 and 134–139 (IGDYIL).

It belongs to the RNA methyltransferase TrmD family. Homodimer.

The protein resides in the cytoplasm. It catalyses the reaction guanosine(37) in tRNA + S-adenosyl-L-methionine = N(1)-methylguanosine(37) in tRNA + S-adenosyl-L-homocysteine + H(+). Its function is as follows. Specifically methylates guanosine-37 in various tRNAs. The polypeptide is tRNA (guanine-N(1)-)-methyltransferase (Wolbachia pipientis wMel).